The following is a 366-amino-acid chain: MAGPAWISKVSRLLGAFHNPKQVTRGFTGGVQTVTLIPGDGIGPEISAAVMKIFDAAKAPIQWEERNVTAIQGPGGKWMIPSEAKESMDKNKMGLKGPLKTPIAAGHPSMNLLLRKTFDLYANVRPCVSIEGYKTPYTDVNIVTIRENTEGEYSGIEHVIVDGVVQSIKLITEGASKRIAEFAFEYARNNHRSNVTAVHKANIMRMSDGLFLQKCREVAESCKDIKFNEMYLDTVCLNMVQDPSQFDVLVMPNLYGDILSDLCAGLIGGLGVTPSGNIGANGVAIFESVHGTAPDIAGKDMANPTALLLSAVMMLRHMGLFDHAARIEAACFATIKDGKSLTKDLGGNAKCSDFTEEICRRVKDLD.

A mitochondrion-targeting transit peptide spans 1 to 27 (MAGPAWISKVSRLLGAFHNPKQVTRGF). K77 is modified (N6-succinyllysine). At T101 the chain carries Phosphothreonine. R115, R125, and R146 together coordinate substrate. K223 carries the N6-acetyllysine modification. 3 residues coordinate Mg(2+): D233, D257, and D261. Residue K343 is modified to N6-acetyllysine; alternate. Position 343 is an N6-succinyllysine; alternate (K343). At K350 the chain carries N6-succinyllysine.

The protein belongs to the isocitrate and isopropylmalate dehydrogenases family. Heterooligomer of subunits alpha (IDH3A), beta (IDH3B), and gamma (IDH3G) in the apparent ratio of 2:1:1. The heterodimer containing one IDH3A and one IDH3B subunit and the heterodimer containing one IDH3A and one IDH3G subunit assemble into a heterotetramer (which contains two subunits of IDH3A, one of IDH3B and one of IDH3G) and further into the heterooctamer. Mg(2+) serves as cofactor. Requires Mn(2+) as cofactor.

It localises to the mitochondrion. It catalyses the reaction D-threo-isocitrate + NAD(+) = 2-oxoglutarate + CO2 + NADH. The heterotetramer and the heterodimer composed of IDH3A and IDH3G subunits can be allosterically activated by citrate (CIT) or/and ADP, and the two activators can act independently or synergistically. The heterodimer composed of IDH3A and IDH3B subunits cannot be allosterically regulated and the allosteric regulation of the heterotetramer is through the IDH3G subunit and not the IDH3B subunit. The IDH3G subunit contains the allosteric site which consists of a CIT-binding site and an ADP-binding site, and the binding of CIT and ADP causes conformational changes at the allosteric site which are transmitted to the active site in the catalytic subunit (IDH3A) through a cascade of conformational changes at the heterodimer interface, leading to stabilization of the isocitrate-binding at the active site and thus activation of the enzyme. ATP can activate the heterotetramer and the heterodimer composed of IDH3A and IDH3G subunits at low concentrations but inhibits their activities at high concentrations, whereas ATP exhibits only inhibitory effect on the heterodimer composed of IDH3A and IDH3B subunits. In terms of biological role, catalytic subunit of the enzyme which catalyzes the decarboxylation of isocitrate (ICT) into alpha-ketoglutarate. The heterodimer composed of the alpha (IDH3A) and beta (IDH3B) subunits and the heterodimer composed of the alpha (IDH3A) and gamma (IDH3G) subunits, have considerable basal activity but the full activity of the heterotetramer (containing two subunits of IDH3A, one of IDH3B and one of IDH3G) requires the assembly and cooperative function of both heterodimers. This chain is Isocitrate dehydrogenase [NAD] subunit alpha, mitochondrial, found in Homo sapiens (Human).